We begin with the raw amino-acid sequence, 332 residues long: GTP 3',8-cyclase (332 aa).

The Radical SAM core domain maps to 9 to 220; sequence GYNRRVDYLR…TQVRERIAER (212 aa). Arg-18 lines the GTP pocket. Residues Cys-25 and Cys-29 each contribute to the [4Fe-4S] cluster site. Tyr-31 is a binding site for S-adenosyl-L-methionine. Cys-32 provides a ligand contact to [4Fe-4S] cluster. Residue Arg-67 coordinates GTP. Gly-71 lines the S-adenosyl-L-methionine pocket. GTP is bound at residue Thr-98. Residue Ser-122 coordinates S-adenosyl-L-methionine. GTP is bound at residue Lys-159. S-adenosyl-L-methionine is bound at residue Met-193. [4Fe-4S] cluster contacts are provided by Cys-258 and Cys-261. 263 to 265 lines the GTP pocket; that stretch reads RVR. [4Fe-4S] cluster is bound at residue Cys-275.

The protein belongs to the radical SAM superfamily. MoaA family. As to quaternary structure, monomer and homodimer. [4Fe-4S] cluster is required as a cofactor.

It carries out the reaction GTP + AH2 + S-adenosyl-L-methionine = (8S)-3',8-cyclo-7,8-dihydroguanosine 5'-triphosphate + 5'-deoxyadenosine + L-methionine + A + H(+). It functions in the pathway cofactor biosynthesis; molybdopterin biosynthesis. In terms of biological role, catalyzes the cyclization of GTP to (8S)-3',8-cyclo-7,8-dihydroguanosine 5'-triphosphate. This is GTP 3',8-cyclase from Pseudomonas fluorescens (strain Pf0-1).